Reading from the N-terminus, the 84-residue chain is MNYLIMFSLALLLVIGVESGRDGYIVDSKNCVYHCYPPCDGLCKKNGAKSGSCGFLVPSGLACWCNDLPENVPIKDPSDDCHKR.

Positions 1–19 (MNYLIMFSLALLLVIGVES) are cleaved as a signal peptide. The region spanning 21 to 82 (RDGYIVDSKN…PIKDPSDDCH (62 aa)) is the LCN-type CS-alpha/beta domain. Disulfide bonds link cysteine 31-cysteine 81, cysteine 35-cysteine 53, cysteine 39-cysteine 63, and cysteine 43-cysteine 65. Position 84 (arginine 84) is a propeptide, removed by a carboxypeptidase.

The protein belongs to the long (4 C-C) scorpion toxin superfamily. Sodium channel inhibitor family. Alpha subfamily. As to expression, expressed by the venom gland.

It is found in the secreted. Its function is as follows. Alpha toxins bind voltage-independently at site-3 of sodium channels (Nav) and inhibit the inactivation of the activated channels, thereby blocking neuronal transmission. This toxin seems to specifically act on Nav1.6/SCN8A sodium channel. In vitro, it inhibits the proliferation of the prostate cancer cell line DU145 (IC(50)=15 uM). It shows low effect on the adhesion of DU145 cells to fibronectin (at 15 uM) and is inactive on DU145 cells migration. The polypeptide is Toxin Aah4 (Androctonus australis (Sahara scorpion)).